The chain runs to 214 residues: MRSISTLLFIISTFISLVSALQLAIPATTNPDPFCIRDFVQEEQMVVVNIKTNGNSGDGQRLDLRIVDSLGNEYRRKNDIAGSVKIGFTSHNSAAFDICFTNQLERKWSKNTNFVREIELDVESGAAARDWNAVQAAEKLKPVEVDLRRIEETTYEISGELQYLKAREERMRDTNESTNSRVKWFSILVITSLVGLGAWQVQYLRHYFKVKHII.

A signal peptide spans 1-20; it reads MRSISTLLFIISTFISLVSA. Topologically, residues 21-183 are lumenal; that stretch reads LQLAIPATTN…TNESTNSRVK (163 aa). The GOLD domain maps to 33–124; sequence PFCIRDFVQE…VREIELDVES (92 aa). A helical membrane pass occupies residues 184-204; sequence WFSILVITSLVGLGAWQVQYL. Residues 205-214 are Cytoplasmic-facing; that stretch reads RHYFKVKHII.

It belongs to the EMP24/GP25L family.

The protein localises to the endoplasmic reticulum membrane. It localises to the golgi apparatus membrane. Constituent of COPII-coated endoplasmic reticulum-derived transport vesicles. Required for efficient transport of a subset of secretory proteins to the Golgi. Facilitates retrograde transport from the Golgi to the endoplasmic reticulum. The polypeptide is Endoplasmic reticulum vesicle protein 25 (ERV25) (Debaryomyces hansenii (strain ATCC 36239 / CBS 767 / BCRC 21394 / JCM 1990 / NBRC 0083 / IGC 2968) (Yeast)).